The chain runs to 510 residues: Ferredoxin--nitrite reductase (510 aa).

[4Fe-4S] cluster contacts are provided by Cys396, Cys402, Cys437, and Cys441. Siroheme is bound at residue Cys441.

This sequence belongs to the nitrite and sulfite reductase 4Fe-4S domain family.

The enzyme catalyses 6 oxidized [2Fe-2S]-[ferredoxin] + NH4(+) + 2 H2O = nitrite + 6 reduced [2Fe-2S]-[ferredoxin] + 8 H(+). This Leptolyngbya laminosa (Phormidium laminosum) protein is Ferredoxin--nitrite reductase (nirA).